Consider the following 142-residue polypeptide: Large ribosomal subunit protein uL13 (142 aa).

The protein belongs to the universal ribosomal protein uL13 family. Part of the 50S ribosomal subunit.

In terms of biological role, this protein is one of the early assembly proteins of the 50S ribosomal subunit, although it is not seen to bind rRNA by itself. It is important during the early stages of 50S assembly. The sequence is that of Large ribosomal subunit protein uL13 from Opitutus terrae (strain DSM 11246 / JCM 15787 / PB90-1).